Consider the following 69-residue polypeptide: Photosystem I reaction center subunit IV (69 aa).

Belongs to the PsaE family.

It is found in the cellular thylakoid membrane. Functionally, stabilizes the interaction between PsaC and the PSI core, assists the docking of the ferredoxin to PSI and interacts with ferredoxin-NADP oxidoreductase. The sequence is that of Photosystem I reaction center subunit IV from Prochlorococcus marinus (strain MIT 9215).